The following is a 109-amino-acid chain: uncharacterized protein (109 aa).

A helical transmembrane segment spans residues 29–49 (ITIIITLVIIFIIFTLIILYF).

The protein localises to the membrane. This is an uncharacterized protein from Sputnik virophage.